The following is a 150-amino-acid chain: MNKRREKGQSHSTRPPHPQPPQWLVFTPEEIELLIAELAKKGYGPSMIGIILRDQYGIPLVKPILGKGVSEVLREKGLHPPLPEDLLMLIRKAVNLRRHLDEHPKDYHAKKGLIDLESKIRRLVKYYKRRGVLPPDWKYDPEAAKLLVST.

The tract at residues 1–22 is disordered; sequence MNKRREKGQSHSTRPPHPQPPQ.

The protein belongs to the universal ribosomal protein uS15 family. As to quaternary structure, part of the 30S ribosomal subunit.

The chain is Small ribosomal subunit protein uS15 from Aeropyrum pernix (strain ATCC 700893 / DSM 11879 / JCM 9820 / NBRC 100138 / K1).